We begin with the raw amino-acid sequence, 30 residues long: Cyclotide cter-F (30 aa).

Positions 1–30 (GIPCGESCVFIPCISSVVGCSCKSKVCYLD) form a cross-link, cyclopeptide (Gly-Asp). 3 disulfide bridges follow: Cys-4–Cys-20, Cys-8–Cys-22, and Cys-13–Cys-27.

In terms of processing, contains 3 disulfide bonds. This is a cyclic peptide.

In terms of biological role, probably participates in a plant defense mechanism. The chain is Cyclotide cter-F from Clitoria ternatea (Butterfly pea).